Consider the following 317-residue polypeptide: Protein CbxX, plasmid (317 aa).

85–92 (GNPGTGKT) is a binding site for ATP.

The protein belongs to the CbxX/CfxQ family.

Functionally, seems to be necessary for the expression of RuBisCO. The sequence is that of Protein CbxX, plasmid (cbxXP) from Cupriavidus necator (strain ATCC 17699 / DSM 428 / KCTC 22496 / NCIMB 10442 / H16 / Stanier 337) (Ralstonia eutropha).